A 388-amino-acid chain; its full sequence is MNVVLKFVRFYGYRGLRIVKGSMQYVWDDSGRKYLDCHAGHGAAFLGHSNPAIVEAVVRQARELVAASSSFSTPSLEEALTEFSRIAPPWAEEIVFLNTGTEAVEAALKAAWLATGKRGIVALKNSFHGRTLASLSVTWNPRYRRGVPVLDTRFLSPSTDPGEVEKLVPEDTAAIIVEPIQGEGGLTKIYAELAKALREAADRVGALLIFDEIQTGFGRTGRVWAHESLGVEPDIMTAGKSIAGGLPASAVLSREGVLATLASGRHGSTHAANPLSMAAVAAASRFLREEGVPDKARAAGALLEGLLRDRIEGLRLVRGVRGEGLMLGVELRLDPGPVLRCLQESERVLALRSGATVVRLLPPYSISREDAEMVVYGLERCICGGSGC.

Pyridoxal 5'-phosphate contacts are provided by residues Gly100 to Thr101 and Phe127. Arg130 serves as a coordination point for substrate. Asp211–Gln214 serves as a coordination point for pyridoxal 5'-phosphate. Residue Lys240 is modified to N6-(pyridoxal phosphate)lysine. Substrate is bound at residue Ser268. Thr269 contributes to the pyridoxal 5'-phosphate binding site.

The protein belongs to the class-III pyridoxal-phosphate-dependent aminotransferase family. LysJ subfamily. In terms of assembly, homodimer. Pyridoxal 5'-phosphate serves as cofactor.

Its subcellular location is the cytoplasm. It catalyses the reaction [amino-group carrier protein]-C-terminal-gamma-(L-lysyl)-L-glutamate + 2-oxoglutarate = [amino-group carrier protein]-C-terminal-N-(1-carboxy-5-oxopentan-1-yl)-L-glutamine + L-glutamate. The enzyme catalyses [amino-group carrier protein]-C-terminal-gamma-(L-ornithyl)-L-glutamate + 2-oxoglutarate = [amino-group carrier protein]-C-terminal-gamma-(L-glutamyl-5-semialdehyde)-L-glutamate + L-glutamate. It functions in the pathway amino-acid biosynthesis; L-lysine biosynthesis via AAA pathway; L-lysine from L-alpha-aminoadipate (Thermus route): step 4/5. It participates in amino-acid biosynthesis; L-arginine biosynthesis. Its function is as follows. Involved in both the arginine and lysine biosynthetic pathways. The chain is Putative [LysW]-aminoadipate semialdehyde/glutamate semialdehyde transaminase from Aeropyrum pernix (strain ATCC 700893 / DSM 11879 / JCM 9820 / NBRC 100138 / K1).